The primary structure comprises 410 residues: LL-diaminopimelate aminotransferase (410 aa).

Residues Tyr15 and Gly42 each contribute to the substrate site. Pyridoxal 5'-phosphate is bound by residues Tyr72, 108–109 (AK), Tyr132, Asn187, Tyr218, and 246–248 (SFS). The substrate site is built by Lys109, Tyr132, and Asn187. An N6-(pyridoxal phosphate)lysine modification is found at Lys249. Pyridoxal 5'-phosphate-binding residues include Arg257 and Asn292. The substrate site is built by Asn292 and Arg388.

Belongs to the class-I pyridoxal-phosphate-dependent aminotransferase family. LL-diaminopimelate aminotransferase subfamily. Homodimer. Pyridoxal 5'-phosphate serves as cofactor.

It carries out the reaction (2S,6S)-2,6-diaminopimelate + 2-oxoglutarate = (S)-2,3,4,5-tetrahydrodipicolinate + L-glutamate + H2O + H(+). It participates in amino-acid biosynthesis; L-lysine biosynthesis via DAP pathway; LL-2,6-diaminopimelate from (S)-tetrahydrodipicolinate (aminotransferase route): step 1/1. Involved in the synthesis of meso-diaminopimelate (m-DAP or DL-DAP), required for both lysine and peptidoglycan biosynthesis. Catalyzes the direct conversion of tetrahydrodipicolinate to LL-diaminopimelate. Can also use m-DAP instead of LL-DAP as the amino-group donor. This chain is LL-diaminopimelate aminotransferase, found in Acetivibrio thermocellus (strain ATCC 27405 / DSM 1237 / JCM 9322 / NBRC 103400 / NCIMB 10682 / NRRL B-4536 / VPI 7372) (Clostridium thermocellum).